Reading from the N-terminus, the 276-residue chain is Cell division protein FtsQ (276 aa).

Topologically, residues 1-11 (MQYILKLKYYL) are cytoplasmic. A helical transmembrane segment spans residues 12–32 (YNITWKLVFICVMLVLLIVGI). Residues 33-276 (HKNIKWVCDY…NVSKGSHDYD (244 aa)) lie on the Periplasmic side of the membrane. One can recognise a POTRA domain in the interval 45 to 115 (GPLSYIIVTG…NTLKINLIEY (71 aa)).

This sequence belongs to the FtsQ/DivIB family. FtsQ subfamily. Part of a complex composed of FtsB, FtsL and FtsQ.

Its subcellular location is the cell inner membrane. Functionally, essential cell division protein. May link together the upstream cell division proteins, which are predominantly cytoplasmic, with the downstream cell division proteins, which are predominantly periplasmic. May control correct divisome assembly. The chain is Cell division protein FtsQ from Blochmanniella floridana.